Consider the following 872-residue polypeptide: Armadillo repeat-containing protein 3 (872 aa).

12 ARM repeats span residues 15–54 (DVFD…KFAL), 57–96 (EENK…ILAS), 98–138 (NDVK…NMSA), 140–179 (YTSK…NLVQ), 181–220 (FQCR…VIAN), 222–262 (KESR…NCLE), 264–304 (MDTM…KAAY), 306–345 (PENR…AMCE), 346–385 (NSGS…NLTT), 388–427 (PANA…NMAM), 429–468 (EPLR…ATAC), and 470–509 (VEAR…VCAG). Residues Cys-507 and Cys-518 are each lipidated (S-palmitoyl cysteine). The segment at 610 to 693 (VSPPSSMEDK…SKGKKEEEKV (84 aa)) is disordered. The span at 626 to 635 (RSISSSSSLR) shows a compositional bias: low complexity. Basic residues predominate over residues 636 to 646 (RSSKEKNKKNS). Positions 675–693 (ATKEKGWRKSKGKKEEEKV) are enriched in basic and acidic residues.

In terms of assembly, homodimer. Interacts with PIK3C3, PIK3R4 and BECN1. Interacts (via ARM domains) with ATG14. In terms of processing, palmitoylation is important for its function in autophagy. As to expression, expressed in skeletal muscle, brain, lung, kidney, prostate and testis. Mainly expressed in skeletal muscle, liver, spleen and thymus. In terms of tissue distribution, expressed only in the testis among normal tissues but is expressed frequently in various cancer tissues and, particularly, in pancreatic, lung and endometrial cancers.

In terms of biological role, essential for male fertility and sperm motility. During spermatogenesis, promotes the autophagic degradation of excessive ribosomes, providing energy resources for mitochondria and thus ensuring sperm flagellar motility. The sequence is that of Armadillo repeat-containing protein 3 (ARMC3) from Homo sapiens (Human).